Reading from the N-terminus, the 907-residue chain is Protein translocase subunit SecA (907 aa).

ATP is bound by residues Q87, 105-109 (GEGKT), and D506. Basic and acidic residues predominate over residues 834–850 (LEQQREEEAREQAEKMK). A disordered region spans residues 834–907 (LEQQREEEAR…KYKQCHGKIE (74 aa)). Positions 864–875 (QPQPSQQQGEQP) are enriched in low complexity. Residues C891, C893, C902, and H903 each coordinate Zn(2+). Basic residues predominate over residues 897 to 907 (KKYKQCHGKIE).

This sequence belongs to the SecA family. In terms of assembly, monomer and homodimer. Part of the essential Sec protein translocation apparatus which comprises SecA, SecYEG and auxiliary proteins SecDF-YajC and YidC. Zn(2+) is required as a cofactor.

The protein resides in the cell inner membrane. It localises to the cytoplasm. The catalysed reaction is ATP + H2O + cellular proteinSide 1 = ADP + phosphate + cellular proteinSide 2.. In terms of biological role, part of the Sec protein translocase complex. Interacts with the SecYEG preprotein conducting channel. Has a central role in coupling the hydrolysis of ATP to the transfer of proteins into and across the cell membrane, serving both as a receptor for the preprotein-SecB complex and as an ATP-driven molecular motor driving the stepwise translocation of polypeptide chains across the membrane. This chain is Protein translocase subunit SecA, found in Alcanivorax borkumensis (strain ATCC 700651 / DSM 11573 / NCIMB 13689 / SK2).